The sequence spans 1378 residues: Carboxypeptidase D (1378 aa).

A signal peptide spans 1–37 (MASGWDERPPWRLESLRLLPPPPLLLLLLLLRSSAQA). The Extracellular portion of the chain corresponds to 38–1297 (AHIKKAEATT…DNRIFGLPRE (1260 aa)). Residues 62 to 380 (HYYHEAALGE…ESLITLIEKV (319 aa)) enclose the Peptidase M14 1 domain. 2 residues coordinate Zn(2+): histidine 139 and glutamate 142. A Cell attachment site motif is present at residues 162 to 164 (RGD). N-linked (GlcNAc...) asparagine glycans are attached at residues asparagine 172 and asparagine 217. Residues 189–232 (RAREGDCGLGDSGPPGTSGRDNSRGRDLNRSFPDQFSTGEPPSL) are disordered. Histidine 257 contacts Zn(2+). Tyrosine 265 carries the phosphotyrosine modification. Serine 270 is modified (phosphoserine). The active-site Proton donor/acceptor is the glutamate 350. Residues asparagine 399, asparagine 410, asparagine 429, and asparagine 522 are each glycosylated (N-linked (GlcNAc...) asparagine). Residues 502–792 (HHHHFPDMEI…RSLIQFMKQV (291 aa)) form the Peptidase M14 2 domain. Positions 564 and 567 each coordinate Zn(2+). An N-linked (GlcNAc...) asparagine glycan is attached at asparagine 626. Histidine 671 contacts Zn(2+). Residue glutamate 762 is the Proton donor/acceptor of the active site. N-linked (GlcNAc...) asparagine glycosylation is found at asparagine 811, asparagine 855, asparagine 867, asparagine 879, asparagine 953, and asparagine 976. A disordered region spans residues 875–898 (TDANNESKKGKGHSTSTDDTSDPT). Residues 930–1209 (RYHSYKDLSE…KSLLSMLVEV (280 aa)) enclose the Peptidase M14 3 domain. Over residues 1039 to 1048 (RERAQEKDCT) the composition is skewed to basic and acidic residues. Residues 1039–1068 (RERAQEKDCTSKTGHTNARGRDLDTDFTSN) form a disordered region. Residues asparagine 1068 and asparagine 1140 are each glycosylated (N-linked (GlcNAc...) asparagine). The helical transmembrane segment at 1298 to 1318 (LVVTVSGATMSALILTACIIW) threads the bilayer. 3 S-palmitoyl cysteine lipidation sites follow: cysteine 1315, cysteine 1319, and cysteine 1321. The Cytoplasmic segment spans residues 1319 to 1378 (CICSIKSNRHKDGFHRLRQHHDEYEDEIRMMSTGSKKSLLSHEFQDETDTEEETLYSSKH). Serine 1356 and serine 1359 each carry phosphoserine. Residues 1357–1378 (LLSHEFQDETDTEEETLYSSKH) are disordered. Residues threonine 1366 and threonine 1368 each carry the phosphothreonine modification.

Belongs to the peptidase M14 family. Requires Zn(2+) as cofactor. In terms of tissue distribution, isoform 1 is widely expressed with highest levels in the hippocampus, spinal cord, atrium, colon, testis and ovaries. Detected in the liver of females but not males. Isoform 2 is not detected in brain or lung.

It localises to the cell membrane. Its subcellular location is the nucleus. The enzyme catalyses Releases C-terminal Arg and Lys from polypeptides.. This chain is Carboxypeptidase D, found in Rattus norvegicus (Rat).